The sequence spans 352 residues: Protein RecA (352 aa).

65–72 (GPESSGKT) is an ATP binding site.

It belongs to the RecA family.

It is found in the cytoplasm. Can catalyze the hydrolysis of ATP in the presence of single-stranded DNA, the ATP-dependent uptake of single-stranded DNA by duplex DNA, and the ATP-dependent hybridization of homologous single-stranded DNAs. It interacts with LexA causing its activation and leading to its autocatalytic cleavage. In Pseudomonas fluorescens (strain SBW25), this protein is Protein RecA.